The following is a 543-amino-acid chain: Serine/threonine-protein kinase Chk2 (543 aa).

The tract at residues 1–66 (MSRESDVEAQ…SGTLSSLETV (66 aa)) is disordered. The span at 8–22 (EAQQSHGSSACSQPH) shows a compositional bias: polar residues. The segment covering 23-62 (GSVTQSQGSSSQSQGISSSSTSTMPNSSQSSHSSSGTLSS) has biased composition (low complexity). S62 carries the phosphoserine; by PLK3 modification. T68 carries the post-translational modification Phosphothreonine; by ATM and MAP3K20. S73 is subject to Phosphoserine; by PLK3. One can recognise an FHA domain in the interval 113–175 (YWFGRDKSCE…NGTFVNTELV (63 aa)). The 267-residue stretch at 220–486 (YIMSKTLGSG…TEEALRHPWL (267 aa)) folds into the Protein kinase domain. ATP contacts are provided by residues 227–234 (GSGACGEV), K249, and 302–308 (ELMEGGE). Residue D347 is the Proton acceptor of the active site. ATP is bound by residues 351–352 (EN) and D368. Residues 368-394 (DFGHSKILGETSLMRTLCGTPTYLAPE) are T-loop/activation segment. S379 carries the phosphoserine; by autocatalysis modification. T383 and T387 each carry phosphothreonine; by autocatalysis. A Phosphoserine modification is found at S456. Positions 506–517 (TALPQVLAQPST) are enriched in polar residues. Positions 506–538 (TALPQVLAQPSTSRKRPREGEAEGAETTKRPAV) are disordered. Basic and acidic residues predominate over residues 523-534 (REGEAEGAETTK).

This sequence belongs to the protein kinase superfamily. CAMK Ser/Thr protein kinase family. CHK2 subfamily. Homodimer. Homodimerization is part of the activation process but the dimer may dissociate following activation. Interacts with PML. Interacts with TP53. Interacts with RB1; phosphorylates RB1. Interacts with BRCA1. Interacts (phosphorylated at Thr-68) with MDC1; requires ATM-mediated phosphorylation of CHEK2. Interacts with TP53BP1; modulates CHEK2 phosphorylation at Thr-68 in response to ionizing radiation. Interacts with CDC25A; phosphorylates CDC25A and mediates its degradation in response to ionizing radiation. Interacts with CUL1; mediates CHEK2 ubiquitination and regulation. Interacts with CDKN2AIP. Interacts (via protein kinase domain) with CCAR2 (via N-terminus). Interacts with SIRT1. Mg(2+) is required as a cofactor. Phosphorylated. Phosphorylated at Ser-73 by PLK3 in response to DNA damage, promoting phosphorylation at Thr-68 by ATM and the G2/M transition checkpoint. Phosphorylation at Thr-68 induces homodimerization. Autophosphorylates at Thr-383 and Thr-387 in the T-loop/activation segment upon dimerization to become fully active and phosphorylate its substrates like for instance CDC25C. DNA damage-induced autophosphorylation at Ser-379 induces CUL1-mediated ubiquitination and regulates the pro-apoptotic function. Phosphorylation at Ser-456 also regulates ubiquitination. Phosphorylated by PLK4. In terms of processing, ubiquitinated. CUL1-mediated ubiquitination regulates the pro-apoptotic function. Ubiquitination may also regulate protein stability. Ubiquitinated by RNF8 via 'Lys-48'-linked ubiquitination. High expression is found in testis, spleen, colon and peripheral blood leukocytes. Low expression is found in other tissues.

The protein resides in the nucleus. Its subcellular location is the PML body. It is found in the nucleoplasm. The enzyme catalyses L-seryl-[protein] + ATP = O-phospho-L-seryl-[protein] + ADP + H(+). It carries out the reaction L-threonyl-[protein] + ATP = O-phospho-L-threonyl-[protein] + ADP + H(+). With respect to regulation, activated through phosphorylation at Thr-68 by ATM in response to DNA double-strand breaks. Activation is modulated by several mediators including MDC1 and TP53BP1. Induces homodimerization with exchange of the T-loop/activation segment between protomers and transphosphorylation of the protomers. The autophosphorylated kinase dimer is fully active. Negatively regulated by PPM1D through dephosphorylation of Thr-68. Its function is as follows. Serine/threonine-protein kinase which is required for checkpoint-mediated cell cycle arrest, activation of DNA repair and apoptosis in response to the presence of DNA double-strand breaks. May also negatively regulate cell cycle progression during unperturbed cell cycles. Following activation, phosphorylates numerous effectors preferentially at the consensus sequence [L-X-R-X-X-S/T]. Regulates cell cycle checkpoint arrest through phosphorylation of CDC25A, CDC25B and CDC25C, inhibiting their activity. Inhibition of CDC25 phosphatase activity leads to increased inhibitory tyrosine phosphorylation of CDK-cyclin complexes and blocks cell cycle progression. May also phosphorylate NEK6 which is involved in G2/M cell cycle arrest. Regulates DNA repair through phosphorylation of BRCA2, enhancing the association of RAD51 with chromatin which promotes DNA repair by homologous recombination. Also stimulates the transcription of genes involved in DNA repair (including BRCA2) through the phosphorylation and activation of the transcription factor FOXM1. Regulates apoptosis through the phosphorylation of p53/TP53, MDM4 and PML. Phosphorylation of p53/TP53 at 'Ser-20' by CHEK2 may alleviate inhibition by MDM2, leading to accumulation of active p53/TP53. Phosphorylation of MDM4 may also reduce degradation of p53/TP53. Also controls the transcription of pro-apoptotic genes through phosphorylation of the transcription factor E2F1. Tumor suppressor, it may also have a DNA damage-independent function in mitotic spindle assembly by phosphorylating BRCA1. Its absence may be a cause of the chromosomal instability observed in some cancer cells. Promotes the CCAR2-SIRT1 association and is required for CCAR2-mediated SIRT1 inhibition. Under oxidative stress, promotes ATG7 ubiquitination by phosphorylating the E3 ubiquitin ligase TRIM32 at 'Ser-55' leading to positive regulation of the autophagosme assembly. In terms of biological role, (Microbial infection) Phosphorylates herpes simplex virus 1/HHV-1 protein ICP0 and thus activates its SUMO-targeted ubiquitin ligase activity. This Homo sapiens (Human) protein is Serine/threonine-protein kinase Chk2.